An 832-amino-acid polypeptide reads, in one-letter code: Alpha-glucan phosphorylase, H isozyme (832 aa).

Lys-678 carries the N6-(pyridoxal phosphate)lysine modification.

The protein belongs to the glycogen phosphorylase family. Pyridoxal 5'-phosphate serves as cofactor.

It localises to the cytoplasm. The catalysed reaction is [(1-&gt;4)-alpha-D-glucosyl](n) + phosphate = [(1-&gt;4)-alpha-D-glucosyl](n-1) + alpha-D-glucose 1-phosphate. Phosphorylase is an important allosteric enzyme in carbohydrate metabolism. Enzymes from different sources differ in their regulatory mechanisms and in their natural substrates. However, all known phosphorylases share catalytic and structural properties. This is Alpha-glucan phosphorylase, H isozyme from Triticum aestivum (Wheat).